Consider the following 289-residue polypeptide: Enoyl-CoA hydratase domain-containing protein 3, mitochondrial (289 aa).

The N-terminal 14 residues, 1 to 14 (MLLRGFSELLKCRG), are a transit peptide targeting the mitochondrion.

Belongs to the enoyl-CoA hydratase/isomerase family.

The protein resides in the mitochondrion. Its function is as follows. May play a role in fatty acid biosynthesis and insulin sensitivity. This chain is Enoyl-CoA hydratase domain-containing protein 3, mitochondrial (echdc3), found in Danio rerio (Zebrafish).